The following is a 337-amino-acid chain: MERAPALAEPEPRVQSLPMVKALNAGLRQALVADPKVLILGEDVGPLGGVFRVTEGLQSEFGASRVVDTPLAEAGIVGTAIGLAMRGYRPVVEIQFNGFVFPGFDQITTQLAKMANRHSGAVSMPVVIRIPHGGHIGAVEHHQEAPEAYFAHTAGLRIVAPSTPHDAYWMIQEAIASDDPVIFFEPMSRYWPKGEVDTLENPLPLHASRIVRSGTDATIVAWAGMVPVALRAAEIAAEEGRSLEVVDLRSLAPIDYAPVLRSVQKTGRLVVAQEAPGIVSVGSEVAAVVGEKAFYSLEAPVLRVAGFDTPFPPAKLESLYLPDADRILEVVDRSLAY.

Glu-73 contacts thiamine diphosphate.

As to quaternary structure, heterodimer of an alpha and a beta chain. Thiamine diphosphate is required as a cofactor.

It carries out the reaction N(6)-[(R)-lipoyl]-L-lysyl-[protein] + pyruvate + H(+) = N(6)-[(R)-S(8)-acetyldihydrolipoyl]-L-lysyl-[protein] + CO2. Functionally, the pyruvate dehydrogenase complex catalyzes the overall conversion of pyruvate to acetyl-CoA and CO(2). It contains multiple copies of three enzymatic components: pyruvate dehydrogenase (E1), dihydrolipoamide acetyltransferase (E2) and lipoamide dehydrogenase (E3). In Leifsonia xyli subsp. xyli (strain CTCB07), this protein is Pyruvate dehydrogenase E1 component subunit beta (pdhB).